Here is a 169-residue protein sequence, read N- to C-terminus: Centrosomal protein 20 (169 aa).

The tract at residues M1–V104 is necessary and sufficient for homooligomerization and localization to centrosomes and pericentriolar satellites. The 33-residue stretch at E49–E81 folds into the LisH domain. The tract at residues T135–R169 is disordered. Residues G151–T160 are compositionally biased toward polar residues.

It belongs to the CEP43 family. Homooligomer; probably required for localization to centrosomes.

The protein localises to the cell projection. Its subcellular location is the cilium. It localises to the cytoplasm. It is found in the cytoskeleton. The protein resides in the cilium basal body. The protein localises to the microtubule organizing center. Its subcellular location is the centrosome. It localises to the cytoplasmic granule. It is found in the centriolar satellite. Involved in the biogenesis of cilia. Required for the recruitment of PLK1 to centrosomes and S phase progression. The sequence is that of Centrosomal protein 20 (Cep20) from Xenopus laevis (African clawed frog).